Consider the following 192-residue polypeptide: Fe/S biogenesis protein NfuA (192 aa).

[4Fe-4S] cluster is bound by residues cysteine 149 and cysteine 152.

This sequence belongs to the NfuA family. In terms of assembly, homodimer. [4Fe-4S] cluster serves as cofactor.

Functionally, involved in iron-sulfur cluster biogenesis. Binds a 4Fe-4S cluster, can transfer this cluster to apoproteins, and thereby intervenes in the maturation of Fe/S proteins. Could also act as a scaffold/chaperone for damaged Fe/S proteins. This Shewanella baltica (strain OS223) protein is Fe/S biogenesis protein NfuA.